A 419-amino-acid polypeptide reads, in one-letter code: Protein farnesyltransferase subunit beta (419 aa).

5 PFTB repeats span residues 68-109 (EDNT…ITLG), 119-160 (RNKL…SVLN), 167-208 (IKNV…ILIG), 215-256 (LPRL…ALLQ), and 329-371 (SIAL…SLCQ). (2E,6E)-farnesyl diphosphate contacts are provided by residues 193 to 196 (HGGY) and 235 to 238 (RTNK). Zn(2+) is bound by residues Asp-241 and Cys-243. 244-247 (YSFW) provides a ligand contact to (2E,6E)-farnesyl diphosphate. His-359 contributes to the Zn(2+) binding site.

It belongs to the protein prenyltransferase subunit beta family. Heterodimer of FTA and FTB. Requires Zn(2+) as cofactor.

The enzyme catalyses L-cysteinyl-[protein] + (2E,6E)-farnesyl diphosphate = S-(2E,6E)-farnesyl-L-cysteinyl-[protein] + diphosphate. Its function is as follows. Catalyzes the transfer of a farnesyl moiety from farnesyl diphosphate to a cysteine at the fourth position from the C-terminus of several proteins. The beta subunit FTB is responsible for peptide-binding. The sequence is that of Protein farnesyltransferase subunit beta (FTB) from Pisum sativum (Garden pea).